Consider the following 359-residue polypeptide: Phospho-N-acetylmuramoyl-pentapeptide-transferase (359 aa).

10 consecutive transmembrane segments (helical) span residues 27–47 (GAFFTALIFGFIFGQPLINAL), 70–90 (TPTMGGLLILAALSLATLLWA), 97–117 (VWLVLGVTWCFGLIGFADDWA), 133–153 (LAIGFVVAFGAALIAAWVHPE), 167–187 (VLLNMGWMYVPFVMIVIVGSA), 198–218 (GLAIMPVMIAAGTLGVIAYAV), 238–258 (LLIFTAGLIGGGLGFLWYNAP), 261–281 (AVFMGDTGSLALGGALGAIAV), 287–307 (IVLAIVGGLFVAEAVSVIVQV), and 336–356 (QVVIRFWIISLILALIGLATL).

It belongs to the glycosyltransferase 4 family. MraY subfamily. Mg(2+) is required as a cofactor.

Its subcellular location is the cell inner membrane. The enzyme catalyses UDP-N-acetyl-alpha-D-muramoyl-L-alanyl-gamma-D-glutamyl-meso-2,6-diaminopimeloyl-D-alanyl-D-alanine + di-trans,octa-cis-undecaprenyl phosphate = di-trans,octa-cis-undecaprenyl diphospho-N-acetyl-alpha-D-muramoyl-L-alanyl-D-glutamyl-meso-2,6-diaminopimeloyl-D-alanyl-D-alanine + UMP. It functions in the pathway cell wall biogenesis; peptidoglycan biosynthesis. Its function is as follows. Catalyzes the initial step of the lipid cycle reactions in the biosynthesis of the cell wall peptidoglycan: transfers peptidoglycan precursor phospho-MurNAc-pentapeptide from UDP-MurNAc-pentapeptide onto the lipid carrier undecaprenyl phosphate, yielding undecaprenyl-pyrophosphoryl-MurNAc-pentapeptide, known as lipid I. The polypeptide is Phospho-N-acetylmuramoyl-pentapeptide-transferase (Jannaschia sp. (strain CCS1)).